Reading from the N-terminus, the 296-residue chain is Cytidine deaminase (296 aa).

CMP/dCMP-type deaminase domains are found at residues 47 to 167 and 186 to 296; these read TEAE…FGPK and DSSD…VDPV. 88-90 provides a ligand contact to substrate; that stretch reads NLE. Position 101 (His101) interacts with Zn(2+). The Proton donor role is filled by Glu103. The Zn(2+) site is built by Cys128 and Cys131.

It belongs to the cytidine and deoxycytidylate deaminase family. In terms of assembly, homodimer. Zn(2+) serves as cofactor.

It carries out the reaction cytidine + H2O + H(+) = uridine + NH4(+). The catalysed reaction is 2'-deoxycytidine + H2O + H(+) = 2'-deoxyuridine + NH4(+). Functionally, this enzyme scavenges exogenous and endogenous cytidine and 2'-deoxycytidine for UMP synthesis. This Shewanella sp. (strain W3-18-1) protein is Cytidine deaminase.